We begin with the raw amino-acid sequence, 552 residues long: Glutamine--tRNA ligase (552 aa).

Positions P34–H44 match the 'HIGH' region motif. ATP-binding positions include E35–N37 and H41–S47. L-glutamine-binding residues include D67 and Y212. ATP-binding positions include T231, R261–L262, and M269–K271. A 'KMSKS' region motif is present at residues V268–R272.

It belongs to the class-I aminoacyl-tRNA synthetase family. In terms of assembly, monomer.

Its subcellular location is the cytoplasm. The catalysed reaction is tRNA(Gln) + L-glutamine + ATP = L-glutaminyl-tRNA(Gln) + AMP + diphosphate. The polypeptide is Glutamine--tRNA ligase (Aliivibrio fischeri (strain MJ11) (Vibrio fischeri)).